The primary structure comprises 398 residues: tRNA(Ile)-lysidine synthase (398 aa).

Position 25-30 (Ser-25–Ser-30) interacts with ATP.

This sequence belongs to the tRNA(Ile)-lysidine synthase family.

Its subcellular location is the cytoplasm. The enzyme catalyses cytidine(34) in tRNA(Ile2) + L-lysine + ATP = lysidine(34) in tRNA(Ile2) + AMP + diphosphate + H(+). Ligates lysine onto the cytidine present at position 34 of the AUA codon-specific tRNA(Ile) that contains the anticodon CAU, in an ATP-dependent manner. Cytidine is converted to lysidine, thus changing the amino acid specificity of the tRNA from methionine to isoleucine. In Francisella tularensis subsp. novicida (strain U112), this protein is tRNA(Ile)-lysidine synthase.